Reading from the N-terminus, the 474-residue chain is Probable threonine--tRNA ligase, mitochondrial (474 aa).

The transit peptide at 1-27 (MMKLKKFQLHTPFAHSCNRVEIYTARF) directs the protein to the mitochondrion.

It belongs to the class-II aminoacyl-tRNA synthetase family.

The protein resides in the mitochondrion matrix. The catalysed reaction is tRNA(Thr) + L-threonine + ATP = L-threonyl-tRNA(Thr) + AMP + diphosphate + H(+). The chain is Probable threonine--tRNA ligase, mitochondrial from Schizosaccharomyces pombe (strain 972 / ATCC 24843) (Fission yeast).